The following is a 426-amino-acid chain: Enolase (426 aa).

Gln-163 is a (2R)-2-phosphoglycerate binding site. Residue Glu-205 is the Proton donor of the active site. 3 residues coordinate Mg(2+): Asp-242, Glu-286, and Asp-313. Lys-338, Arg-367, Ser-368, and Lys-389 together coordinate (2R)-2-phosphoglycerate. Lys-338 acts as the Proton acceptor in catalysis.

It belongs to the enolase family. Requires Mg(2+) as cofactor.

The protein localises to the cytoplasm. Its subcellular location is the secreted. It is found in the cell surface. The enzyme catalyses (2R)-2-phosphoglycerate = phosphoenolpyruvate + H2O. The protein operates within carbohydrate degradation; glycolysis; pyruvate from D-glyceraldehyde 3-phosphate: step 4/5. Catalyzes the reversible conversion of 2-phosphoglycerate (2-PG) into phosphoenolpyruvate (PEP). It is essential for the degradation of carbohydrates via glycolysis. The chain is Enolase from Syntrophobacter fumaroxidans (strain DSM 10017 / MPOB).